The chain runs to 455 residues: UDP-glycosyltransferase 2 (455 aa).

This sequence belongs to the UDP-glycosyltransferase family.

The catalysed reaction is exophillate + UDP-alpha-D-galactose = phaeomoniecin D + UDP + H(+). It participates in secondary metabolite biosynthesis. Functionally, catalyzes the second glycosylation step during phaeomoniecin D biosynthesis, the further O-galactosylation of exophillic acid (produced by the O-glycosyltransferase OGT1) to yield the 4-O-beta-D-galactoside phaeomoniecin D. The chain is UDP-glycosyltransferase 2 from Phaeomoniella chlamydospora (Phaeoacremonium chlamydosporum).